Consider the following 346-residue polypeptide: L-threonine dehydratase catabolic TdcB (346 aa).

59–60 (FT) lines the AMP pocket. The residue at position 64 (Lys64) is an N6-(pyridoxal phosphate)lysine. Residues Gln94, 125–126 (GY), and Asn321 each bind AMP.

The protein belongs to the serine/threonine dehydratase family. As to quaternary structure, in the native structure, TdcB is in a dimeric form, whereas in the TdcB-AMP complex, it exists in a tetrameric form (dimer of dimers). The cofactor is pyridoxal 5'-phosphate.

The enzyme catalyses L-threonine = 2-oxobutanoate + NH4(+). The protein operates within amino-acid degradation; L-threonine degradation via propanoate pathway; propanoate from L-threonine: step 1/4. Its activity is regulated as follows. Each protein molecule can bind up to four molecules of AMP, which act as an allosteric activator to the enzyme. Functionally, catalyzes the anaerobic formation of alpha-ketobutyrate and ammonia from threonine in a two-step reaction. The first step involved a dehydration of threonine and a production of enamine intermediates (aminocrotonate), which tautomerizes to its imine form (iminobutyrate). Both intermediates are unstable and short-lived. The second step is the nonenzymatic hydrolysis of the enamine/imine intermediates to form 2-ketobutyrate and free ammonia. In the low water environment of the cell, the second step is accelerated by RidA. In Staphylococcus aureus (strain bovine RF122 / ET3-1), this protein is L-threonine dehydratase catabolic TdcB (tdcB).